The primary structure comprises 589 residues: Peroxisomal biogenesis factor 8 (589 aa).

The Microbody targeting signal signature appears at 587–589 (SKL).

Its subcellular location is the peroxisome matrix. Functionally, required for peroxisome assembly. This chain is Peroxisomal biogenesis factor 8 (PEX8), found in Saccharomyces cerevisiae (strain ATCC 204508 / S288c) (Baker's yeast).